Here is a 437-residue protein sequence, read N- to C-terminus: ATP-dependent protease ATPase subunit HslU (437 aa).

ATP-binding positions include V18, 60 to 65 (GCGKTE), D250, E315, and R387.

This sequence belongs to the ClpX chaperone family. HslU subfamily. A double ring-shaped homohexamer of HslV is capped on each side by a ring-shaped HslU homohexamer. The assembly of the HslU/HslV complex is dependent on binding of ATP.

Its subcellular location is the cytoplasm. ATPase subunit of a proteasome-like degradation complex; this subunit has chaperone activity. The binding of ATP and its subsequent hydrolysis by HslU are essential for unfolding of protein substrates subsequently hydrolyzed by HslV. HslU recognizes the N-terminal part of its protein substrates and unfolds these before they are guided to HslV for hydrolysis. The chain is ATP-dependent protease ATPase subunit HslU from Methylorubrum populi (strain ATCC BAA-705 / NCIMB 13946 / BJ001) (Methylobacterium populi).